A 376-amino-acid chain; its full sequence is uncharacterized protein (376 aa).

Transmembrane regions (helical) follow at residues 153–173 (QGTL…VLFA) and 188–208 (HRPF…LAVY).

The protein resides in the membrane. This is an uncharacterized protein from Saccharomyces cerevisiae (strain ATCC 204508 / S288c) (Baker's yeast).